We begin with the raw amino-acid sequence, 199 residues long: MTNITIIDTGCANLSSVKFAFDRLGYNTEITFDLNKIKSADKLILPGVGTANAAMYNLQERQLIETIQNLTQPVLGICLGMQLMTEFSEEGNVPTLNLISGKTNRIPDTGLPLPQMGWNRVQFVKNCPLFDGIVQNSHFYFVHSYAVSPNEHSVAISNYGVNFSAAIAKENFYGVQFHPERSGKNGALLLKNFVEKVPF.

The Glutamine amidotransferase type-1 domain maps to 3 to 199 (NITIIDTGCA…LKNFVEKVPF (197 aa)). The active-site Nucleophile is C78. Catalysis depends on residues H178 and E180.

Heterodimer of HisH and HisF.

Its subcellular location is the cytoplasm. The catalysed reaction is 5-[(5-phospho-1-deoxy-D-ribulos-1-ylimino)methylamino]-1-(5-phospho-beta-D-ribosyl)imidazole-4-carboxamide + L-glutamine = D-erythro-1-(imidazol-4-yl)glycerol 3-phosphate + 5-amino-1-(5-phospho-beta-D-ribosyl)imidazole-4-carboxamide + L-glutamate + H(+). It carries out the reaction L-glutamine + H2O = L-glutamate + NH4(+). The protein operates within amino-acid biosynthesis; L-histidine biosynthesis; L-histidine from 5-phospho-alpha-D-ribose 1-diphosphate: step 5/9. Its function is as follows. IGPS catalyzes the conversion of PRFAR and glutamine to IGP, AICAR and glutamate. The HisH subunit catalyzes the hydrolysis of glutamine to glutamate and ammonia as part of the synthesis of IGP and AICAR. The resulting ammonia molecule is channeled to the active site of HisF. The protein is Imidazole glycerol phosphate synthase subunit HisH of Haemophilus influenzae (strain 86-028NP).